Reading from the N-terminus, the 529-residue chain is Na(+)/H(+) antiporter NhaB (529 aa).

12 consecutive transmembrane segments (helical) span residues 13-33 (FLGK…IINP), 34-54 (IVFF…EFIF), 90-110 (LVAN…IYFM), 113-133 (LLLF…ILSL), 149-166 (LTVI…YSIY), 205-225 (LLMH…VGEP), 241-261 (FLIR…LTCF), 306-326 (GLIA…VGLI), 327-347 (GLSV…HSLG), 351-371 (EEAL…AVII), 451-471 (ATPN…APLI), and 479-499 (VIMA…GIVF).

This sequence belongs to the NhaB Na(+)/H(+) (TC 2.A.34) antiporter family.

Its subcellular location is the cell inner membrane. The catalysed reaction is 2 Na(+)(in) + 3 H(+)(out) = 2 Na(+)(out) + 3 H(+)(in). Functionally, na(+)/H(+) antiporter that extrudes sodium in exchange for external protons. The polypeptide is Na(+)/H(+) antiporter NhaB (Vibrio vulnificus (strain YJ016)).